Consider the following 293-residue polypeptide: Haloalkane dehalogenase (293 aa).

In terms of domain architecture, AB hydrolase-1 spans 34-158 (PVLFLHGNPT…FQAFRTADVG (125 aa)). D106 acts as the Nucleophile in catalysis. E130 acts as the Proton donor in catalysis. Catalysis depends on H272, which acts as the Proton acceptor.

The protein belongs to the haloalkane dehalogenase family. Type 2 subfamily. As to quaternary structure, monomer.

The catalysed reaction is 1-haloalkane + H2O = a halide anion + a primary alcohol + H(+). The protein operates within xenobiotic degradation; haloalkane degradation. It functions in the pathway xenobiotic degradation; 1,3-dichloropropene degradation. Functionally, catalyzes hydrolytic cleavage of carbon-halogen bonds in halogenated aliphatic compounds, leading to the formation of the corresponding primary alcohols, halide ions and protons. Has a broad substrate specificity, as it is able to dehalogenate mono- and di- chlorinated and brominated alkanes (up to at least C10), and the two isomers of 1,3-dichloropropene to 3-chloroallyl alcohol; the highest activity was found with 1,2-dibromoethane, while no activity was observed with the analog 1,2-dichloroethane. In Pseudomonas pavonaceae, this protein is Haloalkane dehalogenase (dhaA).